Here is a 104-residue protein sequence, read N- to C-terminus: T-complex protein 1 subunit zeta (104 aa).

An ADP-binding site is contributed by G24. G24 contributes to the ATP binding site. D75 contributes to the Mg(2+) binding site. Residues G76, T78, and S79 each coordinate ADP. ATP-binding residues include G76 and T78.

Belongs to the TCP-1 chaperonin family. In terms of assembly, component of the chaperonin-containing T-complex (TRiC), a hexadecamer composed of two identical back-to-back stacked rings enclosing a protein folding chamber. Each ring is made up of eight different subunits: TCP1/CCT1, CCT2, CCT3, CCT4, CCT5, CCT6A/CCT6, CCT7, CCT8. Interacts with PACRG.

The protein localises to the cytoplasm. The enzyme catalyses ATP + H2O = ADP + phosphate + H(+). Its function is as follows. Component of the chaperonin-containing T-complex (TRiC), a molecular chaperone complex that assists the folding of actin, tubulin and other proteins upon ATP hydrolysis. The TRiC complex mediates the folding of WRAP53/TCAB1, thereby regulating telomere maintenance. This Sus scrofa (Pig) protein is T-complex protein 1 subunit zeta (CCT6).